A 657-amino-acid polypeptide reads, in one-letter code: Transcription factor 12 (657 aa).

The segment covering 1–20 (MDEKGGTTSWGTSGQPSPSY) has biased composition (polar residues). Disordered regions lie at residues 1–76 (MDEK…SGLS), 89–285 (LGSP…QTGD), 297–340 (PDHT…YENS), 459–555 (VSAQ…ERRM), and 628–657 (KVSA…MGHM). Residues 30-43 (HYSDHLNDSRKGTH) show a composition bias toward basic and acidic residues. Composition is skewed to polar residues over residues 49–70 (TPFS…SLYS) and 93–112 (AQLS…SATS). The segment at 68 to 89 (LYSRDSGLSGCQSSLLRQELGL) is leucine-zipper. Positions 130–136 (KKVRKVP) match the Nuclear localization signal motif. Composition is skewed to polar residues over residues 168 to 193 (MFAS…NGMS), 202 to 216 (GTST…SYGS), and 230 to 254 (VSPT…SSSP). Over residues 300–311 (TSSSFPSNPSTP) the composition is skewed to low complexity. The segment covering 312–340 (VGSPSPLTGASQWSRSGGQAPSSPNYENS) has biased composition (polar residues). Composition is skewed to basic and acidic residues over residues 493–505 (IKSE…ENIH), 511–526 (DDMK…DIKV), and 543–555 (PEQK…ERRM). In terms of domain architecture, bHLH spans 552-605 (ERRMANNARERLRVRDINEAFKELGRMCQLHLKSEKPQTKLLILHQAVAVILSL). Residues 607-630 (QQVRERNLNPKAACLKRREEEKVS) form a class A specific domain region. The span at 648 to 657 (SETTNPMGHM) shows a compositional bias: polar residues.

As to quaternary structure, efficient DNA binding requires dimerization with another bHLH protein. Forms homo- or heterooligomers with myogenin, E12 and ITF2 proteins.

The protein localises to the nucleus. Functionally, transcriptional regulator. Involved in the initiation of neuronal differentiation. Activates transcription by binding to the E box-containing promoter. In Gallus gallus (Chicken), this protein is Transcription factor 12 (TCF12).